The chain runs to 172 residues: Adenine phosphoribosyltransferase (172 aa).

The protein belongs to the purine/pyrimidine phosphoribosyltransferase family. As to quaternary structure, homodimer.

The protein localises to the cytoplasm. It catalyses the reaction AMP + diphosphate = 5-phospho-alpha-D-ribose 1-diphosphate + adenine. It functions in the pathway purine metabolism; AMP biosynthesis via salvage pathway; AMP from adenine: step 1/1. Functionally, catalyzes a salvage reaction resulting in the formation of AMP, that is energically less costly than de novo synthesis. This is Adenine phosphoribosyltransferase from Synechocystis sp. (strain ATCC 27184 / PCC 6803 / Kazusa).